The following is a 209-amino-acid chain: Methylated-DNA--protein-cysteine methyltransferase (209 aa).

Zn(2+) is bound at residue cysteine 5. Serine 14 is subject to Phosphoserine. Positions 24, 29, and 89 each coordinate Zn(2+). DNA contacts are provided by threonine 99, tyrosine 118, glutamine 119, asparagine 127, and arginine 132. The Nucleophile; methyl group acceptor role is filled by cysteine 149. Serine 155 lines the DNA pocket.

Belongs to the MGMT family. Requires Zn(2+) as cofactor.

The protein localises to the nucleus. The catalysed reaction is a 6-O-methyl-2'-deoxyguanosine in DNA + L-cysteinyl-[protein] = S-methyl-L-cysteinyl-[protein] + a 2'-deoxyguanosine in DNA. The enzyme catalyses a 4-O-methyl-thymidine in DNA + L-cysteinyl-[protein] = a thymidine in DNA + S-methyl-L-cysteinyl-[protein]. In terms of biological role, involved in the cellular defense against the biological effects of O6-methylguanine (O6-MeG) and O4-methylthymine (O4-MeT) in DNA. Repairs the methylated nucleobase in DNA by stoichiometrically transferring the methyl group to a cysteine residue in the enzyme. This is a suicide reaction: the enzyme is irreversibly inactivated. The protein is Methylated-DNA--protein-cysteine methyltransferase (Mgmt) of Rattus norvegicus (Rat).